A 437-amino-acid chain; its full sequence is Transcription factor ets-4 (437 aa).

Positions 1–30 (MNGTGSVGHRWNSLSPEPHSGTESTASTPF) are disordered. The segment covering 21–30 (GTESTASTPF) has biased composition (polar residues). Lysine 32 is covalently cross-linked (Glycyl lysine isopeptide (Lys-Gly) (interchain with G-Cter in SUMO)). Serine 73 carries the post-translational modification Phosphoserine. Residue lysine 83 forms a Glycyl lysine isopeptide (Lys-Gly) (interchain with G-Cter in SUMO) linkage. One can recognise a PNT domain in the interval 120-202 (HLIQDISTTC…AQLQVWKTGT (83 aa)). Residues 275 to 302 (QGTVLPSPSNSDTSSNGSSQDMNDDDID) are disordered. Low complexity predominate over residues 280–293 (PSPSNSDTSSNGSS). Residues 349–432 (VHLWQFIREL…KKQRLVYKFL (84 aa)) constitute a DNA-binding region (ETS).

This sequence belongs to the ETS family. As to quaternary structure, may interact with cebp-1. May interact with tdpt-1 to facilitate its sumoylation. In terms of processing, phosphorylation is required for axon regeneration. Sumoylated; sumoylation inhibits phosphorylation, which is required for probable interaction with cebp-1 and consequently the expression of svh-2. In terms of tissue distribution, expressed in cells of the anterior and posterior bulbs of the pharynx, seam cells, a few unidentified cells of the vulva, the hypodermis, several unidentified neurons, labial socket cells of the head and rectal cells.

The protein localises to the nucleus. In terms of biological role, transcription factor which binds to 5'-GGAA/T-3' DNA consensus sequences. Both positively and negatively regulates the expression of target genes. Plays a role in the regulation of adult lifespan, which may in part be through modulation of daf-16 activity. Regulates the expression of genes such as svh-2 in response to axon injury and in addition, may function downstream of the cAMP signaling pathway to promote axon regeneration. Regulates the expression of lipid metabolism genes and may also control the expression of the RNA-binding protein rege-1 which too has been implicated in the control of fat accumulation. The sequence is that of Transcription factor ets-4 from Caenorhabditis elegans.